A 393-amino-acid polypeptide reads, in one-letter code: Acetate kinase (393 aa).

N10 is a binding site for Mg(2+). ATP is bound at residue K17. A substrate-binding site is contributed by R89. The active-site Proton donor/acceptor is the D146. Residues 204–208 (HLGNG), 278–280 (DMR), and 323–327 (GVGEN) each bind ATP. Position 376 (E376) interacts with Mg(2+).

It belongs to the acetokinase family. In terms of assembly, homodimer. The cofactor is Mg(2+). Mn(2+) is required as a cofactor.

It is found in the cytoplasm. The catalysed reaction is acetate + ATP = acetyl phosphate + ADP. It functions in the pathway metabolic intermediate biosynthesis; acetyl-CoA biosynthesis; acetyl-CoA from acetate: step 1/2. Its function is as follows. Catalyzes the formation of acetyl phosphate from acetate and ATP. Can also catalyze the reverse reaction. This is Acetate kinase from Mycoplasma genitalium (strain ATCC 33530 / DSM 19775 / NCTC 10195 / G37) (Mycoplasmoides genitalium).